The sequence spans 221 residues: 7-cyano-7-deazaguanine synthase (221 aa).

Position 10-20 (10-20) interacts with ATP; that stretch reads LSGGLDSTTCM. Zn(2+) is bound by residues cysteine 188, cysteine 196, cysteine 199, and cysteine 202.

It belongs to the QueC family. Homodimer. Requires Zn(2+) as cofactor.

It carries out the reaction 7-carboxy-7-deazaguanine + NH4(+) + ATP = 7-cyano-7-deazaguanine + ADP + phosphate + H2O + H(+). Its pathway is purine metabolism; 7-cyano-7-deazaguanine biosynthesis. Its function is as follows. Catalyzes the ATP-dependent conversion of 7-carboxy-7-deazaguanine (CDG) to 7-cyano-7-deazaguanine (preQ(0)). This chain is 7-cyano-7-deazaguanine synthase, found in Oceanobacillus iheyensis (strain DSM 14371 / CIP 107618 / JCM 11309 / KCTC 3954 / HTE831).